A 66-amino-acid chain; its full sequence is UPF0370 protein YpfN (66 aa).

Residues 4–24 (LAKYWWILVLVFLVGVLLNVI) form a helical membrane-spanning segment. Residues 39 to 66 (KPELPPHRDFNDKWDDEDDWPKKDQSKK) are disordered. A compositionally biased stretch (basic and acidic residues) spans 42–51 (LPPHRDFNDK).

This sequence belongs to the UPF0370 family.

The protein localises to the cell membrane. The sequence is that of UPF0370 protein YpfN from Salmonella arizonae (strain ATCC BAA-731 / CDC346-86 / RSK2980).